A 475-amino-acid chain; its full sequence is Ribulose bisphosphate carboxylase large chain (475 aa).

Positions 1 to 2 (MS) are excised as a propeptide. P3 carries the post-translational modification N-acetylproline. An N6,N6,N6-trimethyllysine modification is found at K14. Positions 123 and 173 each coordinate substrate. K175 functions as the Proton acceptor in the catalytic mechanism. Substrate is bound at residue K177. K201, D203, and E204 together coordinate Mg(2+). The residue at position 201 (K201) is an N6-carboxylysine. The Proton acceptor role is filled by H294. Positions 295, 327, and 379 each coordinate substrate.

The protein belongs to the RuBisCO large chain family. Type I subfamily. Heterohexadecamer of 8 large chains and 8 small chains; disulfide-linked. The disulfide link is formed within the large subunit homodimers. The cofactor is Mg(2+). In terms of processing, the disulfide bond which can form in the large chain dimeric partners within the hexadecamer appears to be associated with oxidative stress and protein turnover.

It is found in the plastid. The protein localises to the chloroplast. It catalyses the reaction 2 (2R)-3-phosphoglycerate + 2 H(+) = D-ribulose 1,5-bisphosphate + CO2 + H2O. The catalysed reaction is D-ribulose 1,5-bisphosphate + O2 = 2-phosphoglycolate + (2R)-3-phosphoglycerate + 2 H(+). Its function is as follows. RuBisCO catalyzes two reactions: the carboxylation of D-ribulose 1,5-bisphosphate, the primary event in carbon dioxide fixation, as well as the oxidative fragmentation of the pentose substrate in the photorespiration process. Both reactions occur simultaneously and in competition at the same active site. In Populus trichocarpa (Western balsam poplar), this protein is Ribulose bisphosphate carboxylase large chain.